A 700-amino-acid polypeptide reads, in one-letter code: MAKRIFSVSFLLVLLNVLHICIKFSVADLPTHVETKNLLGKWKILRTKTSPNLTTCGSSQPNKNTYNVGITDYKKYLLENNYEFVSELNVILSDDYVLYGDIYNTQDNEHRSKWKVLAVYDENKRVIGTWTTICDEGFEIKIGNETYAALMHYEPNGKCGPVSDEDSLDSNGDTDCYTTSFSKIRYGWLDVENEKNEHLHGCFYAERIFDNVNEIKHLDSFTIDKDSQNVLQTFTYDTKLNNILNSNNMLYKFGNLQKPTFTKRNNTNVQFNSELNWHRMKHHGKKKPLKKSMLDASRQTYACPCNANEVVDNVINKGDSDNPVSPTLIQLNNNLKNTTQTGNKDTNEMDLENYEDTLNSPKRELEINELPKNFTWGDPWNKNTREYEVTNQLLCGSCYIASQLYAFKRRIEVALTKKLDRKYLNNFDDQLSIQTVLSCSFYDQGCNGGFPYLVSKLAKLQGIPLNVYFPYSATEETCPYNISKHPNDMNGSAKLREINAIFNSNNNMSTYNNINNDHHQLGVYANTASSQEQHGISEENRWYAKDFNYVGGCYGCNQCNGEKIMMNEIYRNGPIVSSFEASPDFYDYADGVYFVEDFPHARRCTIEPKNDGVYNITGWDRVNHAIVLLGWGEEEINGKLYKYWIGRNSWGNGWGKEGYFKILRGQNFSGIESQSLFIEPDFSRGAGKILLEKMQKELGN.

The first 27 residues, 1 to 27 (MAKRIFSVSFLLVLLNVLHICIKFSVA), serve as a signal peptide directing secretion. N-linked (GlcNAc...) asparagine glycosylation is found at asparagine 52, asparagine 144, asparagine 265, asparagine 337, and asparagine 373. The propeptide occupies 210-369 (DNVNEIKHLD…SPKRELEINE (160 aa)). Cystine bridges form between cysteine 395-cysteine 446 and cysteine 439-cysteine 478. Residue cysteine 398 is part of the active site. At threonine 416 the chain carries Sulfothreonine. 2 residues coordinate chloride: phenylalanine 450 and tyrosine 452. 3 N-linked (GlcNAc...) asparagine glycosylation sites follow: asparagine 481, asparagine 490, and asparagine 507. Tyrosine 549 contributes to the chloride binding site. An N-linked (GlcNAc...) asparagine glycan is attached at asparagine 615. Residues histidine 624 and asparagine 648 contribute to the active site. The N-linked (GlcNAc...) asparagine glycan is linked to asparagine 667.

Belongs to the peptidase C1 family. Monomer. Chloride serves as cofactor.

Its subcellular location is the vacuole lumen. The protein localises to the parasitophorous vacuole lumen. The enzyme catalyses Release of an N-terminal dipeptide, Xaa-Yaa-|-Zaa-, except when Xaa is Arg or Lys, or Yaa or Zaa is Pro.. In terms of biological role, thiol protease that cleaves dipeptides from the N-terminus of protein substrates. Active against a broad range of dipeptide substrates composed of both polar and hydrophobic amino acids. Proline cannot occupy the P1 position and arginine or lysine cannot occupy the P2 position of the substrate. Involved in host hemoglobin degradation by generating dipeptides from hemoglobin-derived oligopeptides. This chain is Dipeptidyl aminopeptidase 1, found in Plasmodium falciparum (isolate 3D7).